The sequence spans 432 residues: Bifunctional IPC transferase and DIPP synthase (432 aa).

Positions 3 to 225 (PERAVILAAG…RARRMLVRTA (223 aa)) are mobA-like NTP transferase. CTP is bound by residues 9-11 (LAA), Lys22, and Glu113. Mg(2+) is bound at residue Glu113. Residues 226-426 (VKGTGDGFVS…LTLYFVVKKV (201 aa)) are CDP-alcohol phosphatidyltransferases. 3 consecutive transmembrane segments (helical) span residues 264 to 284 (FLLG…AGIL), 337 to 356 (IWYF…SYST), and 385 to 405 (VFLT…ALFL).

The protein in the N-terminal section; belongs to the MobA family. This sequence in the C-terminal section; belongs to the CDP-alcohol phosphatidyltransferase class-I family. The cofactor is Mg(2+).

It localises to the membrane. The enzyme catalyses 1D-myo-inositol 3-phosphate + CTP + H(+) = CDP-1L-myo-inositol + diphosphate. It carries out the reaction CDP-1L-myo-inositol + 1D-myo-inositol 3-phosphate = bis(1L-myo-inositol) 3,1'-phosphate 1-phosphate + CMP + H(+). Functionally, involved in biosynthesis of di-myo-inositol phosphate (DIP), a widespread organic solute in microorganisms adapted to hot environments. Catalyzes the condensation of CTP and L-myo-inositol-1-phosphate into CDP-L-myo-inositol, as well as the biosynthesis of di-myo-inositol-1,3'-phosphate-1'-phosphate (DIPP) from CDP-L-myo-inositol and L-myo-inositol-1-phosphate. The chain is Bifunctional IPC transferase and DIPP synthase from Thermococcus kodakarensis (strain ATCC BAA-918 / JCM 12380 / KOD1) (Pyrococcus kodakaraensis (strain KOD1)).